The chain runs to 437 residues: Enolase (437 aa).

Q163 contributes to the (2R)-2-phosphoglycerate binding site. The active-site Proton donor is the E205. Mg(2+)-binding residues include D242, E285, and D312. (2R)-2-phosphoglycerate contacts are provided by K337, R366, S367, and K388. The active-site Proton acceptor is K337.

This sequence belongs to the enolase family. Requires Mg(2+) as cofactor.

Its subcellular location is the cytoplasm. It is found in the secreted. The protein localises to the cell surface. It catalyses the reaction (2R)-2-phosphoglycerate = phosphoenolpyruvate + H2O. Its pathway is carbohydrate degradation; glycolysis; pyruvate from D-glyceraldehyde 3-phosphate: step 4/5. Functionally, catalyzes the reversible conversion of 2-phosphoglycerate (2-PG) into phosphoenolpyruvate (PEP). It is essential for the degradation of carbohydrates via glycolysis. This Nitratidesulfovibrio vulgaris (strain DP4) (Desulfovibrio vulgaris) protein is Enolase.